Consider the following 309-residue polypeptide: DnaJ protein ERDJ7 (309 aa).

The N-terminal stretch at 1 to 36 (MSQVGSAGEGSNSMAAAPPPRLLLLVVLLLVPVSNA) is a signal peptide. The Lumenal segment spans residues 37 to 130 (IYCEEDDCYD…YRAYYGHKTD (94 aa)). Residues 43 to 107 (DCYDLLGVKQ…STRGQYDYAI (65 aa)) enclose the J domain. An N-linked (GlcNAc...) asparagine glycan is attached at Asn55. The chain crosses the membrane as a helical span at residues 131–151 (PRAVLIGLLLIISAFQYLNQF). Residues 152–219 (GRYSKAIETV…GVEKPSLWRL (68 aa)) are Cytoplasmic-facing. The helical transmembrane segment at 220–242 (YGVQFILLPYSIGKVLSWKFCWF) threads the bilayer. The Lumenal portion of the chain corresponds to 243–309 (WRYRIKKLPY…EMRKESKRRR (67 aa)).

The protein localises to the endoplasmic reticulum membrane. Functionally, may play a role in protein folding in the endoplasmic reticulum. The polypeptide is DnaJ protein ERDJ7 (Oryza sativa subsp. japonica (Rice)).